We begin with the raw amino-acid sequence, 279 residues long: uncharacterized protein (279 aa).

3 helical membrane passes run 1 to 21, 38 to 58, and 131 to 151; these read MGFI…LCGI, FACH…SVVA, and SLRY…VFID.

Belongs to the 1-acyl-sn-glycerol-3-phosphate acyltransferase family.

The protein localises to the endoplasmic reticulum membrane. This is an uncharacterized protein from Schizosaccharomyces pombe (strain 972 / ATCC 24843) (Fission yeast).